We begin with the raw amino-acid sequence, 76 residues long: Large ribosomal subunit protein bL31 (76 aa).

Positions 16, 18, 38, and 41 each coordinate Zn(2+).

The protein belongs to the bacterial ribosomal protein bL31 family. Type A subfamily. In terms of assembly, part of the 50S ribosomal subunit. It depends on Zn(2+) as a cofactor.

Its function is as follows. Binds the 23S rRNA. This is Large ribosomal subunit protein bL31 from Nocardia farcinica (strain IFM 10152).